A 339-amino-acid chain; its full sequence is Annexin A2 (339 aa).

Position 2 is an N-acetylserine (Ser-2). Positions 2–24 (STVHEILCKLSLEGDHSTPASAY) are S100A10-binding site. Tyr-24 is modified (phosphotyrosine; by SRC). Ser-26 bears the Phosphoserine; by PKC mark. Annexin repeat units follow at residues 33-104 (FDAE…GLLK) and 105-176 (TPAQ…ALAK). Lys-49 bears the N6-acetyllysine; alternate mark. A Glycyl lysine isopeptide (Lys-Gly) (interchain with G-Cter in SUMO1); alternate cross-link involves residue Lys-49. Residue Lys-49 forms a Glycyl lysine isopeptide (Lys-Gly) (interchain with G-Cter in SUMO2); alternate linkage. Lys-152 is subject to N6-acetyllysine. A Phosphoserine modification is found at Ser-184. 2 Annexin repeats span residues 189-261 (ELID…NLVQ) and 265-336 (NKPL…YLCG). Tyr-199 carries the post-translational modification Phosphotyrosine. The residue at position 227 (Lys-227) is an N6-acetyllysine.

It belongs to the annexin family. In terms of assembly, heterotetramer containing 2 light chains of S100A10/p11 and 2 heavy chains of ANXA2/p36. Interacts with ATP1B1. Interacts with DYSF. Interacts with COCH. Interacts (via repeat Annexin 1) with PCSK9 (via the C-terminal domain); the interaction inhibits the degradation of LDLR. Interacts with CEACAM1 (via the cytoplasmic domain); this interaction is regulated by phosphorylation of CEACAM1. Interacts with APPL2 and APPL1; targets APPL2 to endosomes and acting in parallel to RAB5A. Interacts with S100A4. May interact with UBAP2. Interacts with PLEKHG4B; this interaction is required for PLEKHG4B localization to cell-cell adhesions. (Microbial infection) Interacts with classical swine fever virus envelope glycoprotein E2. Post-translationally, ISGylated.

The protein resides in the secreted. It is found in the extracellular space. It localises to the extracellular matrix. Its subcellular location is the basement membrane. The protein localises to the melanosome. Functionally, calcium-regulated membrane-binding protein whose affinity for calcium is greatly enhanced by anionic phospholipids. It binds two calcium ions with high affinity. May be involved in heat-stress response. Inhibits PCSK9-enhanced LDLR degradation, probably reduces PCSK9 protein levels via a translational mechanism but also competes with LDLR for binding with PCSK9. Binds to endosomes damaged by phagocytosis of particulate wear debris and participates in endosomal membrane stabilization, thereby limiting NLRP3 inflammasome activation. Required for endothelial cell surface plasmin generation and may support fibrinolytic surveillance and neoangiogenesis. Its function is as follows. (Microbial infection) May serve as a receptor for classical swine fever virus (CSFV). Promotes CSFV infection. In Sus scrofa (Pig), this protein is Annexin A2 (ANXA2).